The chain runs to 77 residues: Subtilisin-chymotrypsin inhibitor CI-1C (77 aa).

This sequence belongs to the protease inhibitor I13 (potato type I serine protease inhibitor) family.

In terms of biological role, inhibits both subtilisin and chymotrypsin. The chain is Subtilisin-chymotrypsin inhibitor CI-1C from Hordeum vulgare (Barley).